A 385-amino-acid polypeptide reads, in one-letter code: UPF0284 protein P9215_05181 (385 aa).

Belongs to the UPF0284 family.

The sequence is that of UPF0284 protein P9215_05181 from Prochlorococcus marinus (strain MIT 9215).